The chain runs to 482 residues: GPI mannosyltransferase 3 (482 aa).

Residues 12–32 traverse the membrane as a helical segment; sequence LFAFIFIFRLANSFAIETFFQ. Asn-80 is a glycosylation site (N-linked (GlcNAc...) asparagine). 4 consecutive transmembrane segments (helical) span residues 114–134, 137–155, 175–195, and 199–219; these read KLAW…YVIT, FSNN…FWPW, IIRP…LISI, and LKWV…NTAL. A glycan (N-linked (GlcNAc...) asparagine) is linked at Asn-242. Helical transmembrane passes span 252–272, 274–294, and 324–344; these read WHFY…PLMI, GLKK…FSLI, and FVLI…NVHE.

This sequence belongs to the glycosyltransferase 22 family. PIGB subfamily.

The protein localises to the endoplasmic reticulum membrane. It functions in the pathway glycolipid biosynthesis; glycosylphosphatidylinositol-anchor biosynthesis. In terms of biological role, mannosyltransferase involved in glycosylphosphatidylinositol-anchor biosynthesis. Transfers the third mannose to Man2-GlcN-acyl-PI during GPI precursor assembly. The sequence is that of GPI mannosyltransferase 3 (GPI10) from Candida albicans (strain SC5314 / ATCC MYA-2876) (Yeast).